A 75-amino-acid polypeptide reads, in one-letter code: Small ribosomal subunit protein bS18 (75 aa).

The protein belongs to the bacterial ribosomal protein bS18 family. As to quaternary structure, part of the 30S ribosomal subunit. Forms a tight heterodimer with protein bS6.

Its function is as follows. Binds as a heterodimer with protein bS6 to the central domain of the 16S rRNA, where it helps stabilize the platform of the 30S subunit. The protein is Small ribosomal subunit protein bS18 of Pseudoalteromonas atlantica (strain T6c / ATCC BAA-1087).